Consider the following 377-residue polypeptide: N5-carboxyaminoimidazole ribonucleotide synthase (377 aa).

Residues R93, K133, 138–144 (GYDGKGQ), 175–178 (EEFV), E183, H206, and 257–258 (NE) contribute to the ATP site. The region spanning 97 to 287 (KALLDHAGVR…QFENHLRAVC (191 aa)) is the ATP-grasp domain.

This sequence belongs to the PurK/PurT family. As to quaternary structure, homodimer.

It carries out the reaction 5-amino-1-(5-phospho-beta-D-ribosyl)imidazole + hydrogencarbonate + ATP = 5-carboxyamino-1-(5-phospho-D-ribosyl)imidazole + ADP + phosphate + 2 H(+). Its pathway is purine metabolism; IMP biosynthesis via de novo pathway; 5-amino-1-(5-phospho-D-ribosyl)imidazole-4-carboxylate from 5-amino-1-(5-phospho-D-ribosyl)imidazole (N5-CAIR route): step 1/2. Functionally, catalyzes the ATP-dependent conversion of 5-aminoimidazole ribonucleotide (AIR) and HCO(3)(-) to N5-carboxyaminoimidazole ribonucleotide (N5-CAIR). The protein is N5-carboxyaminoimidazole ribonucleotide synthase of Vibrio vulnificus (strain CMCP6).